A 221-amino-acid polypeptide reads, in one-letter code: Lactate racemization regulatory protein (221 aa).

Residues asparagine 139–serine 213 form the HTH crp-type domain. The H-T-H motif DNA-binding region spans asparagine 172–lysine 192.

In terms of assembly, multimerizes on DNA. Multimerization is required for transcription activation.

Its activity is regulated as follows. L-lactate acts as a positive effector on the binding and multimerization of LarR on DNA, while D-lactate antagonizes the positive effect of L-lactate. Functionally, positive transcriptional regulator that is absolutely required for the expression of lactate racemase (Lar) activity. Controls Lar expression by sensing the L-/D-lactate ration. Binds to a 16-bp palindromic sequence (Lar box motif) that is present in the larR-larA intergenic region, allowing transcription of the larABCDE operon. The polypeptide is Lactate racemization regulatory protein (Lactiplantibacillus plantarum (strain ATCC BAA-793 / NCIMB 8826 / WCFS1) (Lactobacillus plantarum)).